The chain runs to 1015 residues: Condensin complex subunit 3 (1015 aa).

HEAT repeat units follow at residues 94 to 131 (GLLNYLFTFLLKSHEANSNAVRFRVCLLINKLLGSMPE), 138 to 173 (DVFDKINKAMLIRLKDKIPNVRIQAVLALSRLQDPK), 174 to 212 (DDECPVVNAYATLIENDSNPEVRRAVLSCIAPSAKTLPK), 238 to 275 (MRAMSIAQRVMLLQQGLNDRSDAVKQAMQKHLLQGWLR), and 276 to 313 (FSEGNILELLHRLDVENSSEVAVSVLNALFSITPLSEL). S390 carries the phosphoserine modification. 3 HEAT repeats span residues 399–436 (EFIGQQLILIIKSLDTSEEGGRKKLLAVLQEILILPTI), 439–478 (SLVSFLVERLLHIIIDDNKRTQIVTEIISEIRAPIVTVGV), and 617–654 (DFARKHFVLLLQVLQIDDVTIKISALKAIFDQLMTFGI). Residue S674 is modified to Phosphoserine. HEAT repeat units follow at residues 687-724 (ATAKNVLKLLSDFLDSEVSELRTGAAEGLAKLMFSGLL) and 865-907 (KDLL…QAEA). The residue at position 931 (T931) is a Phosphothreonine. Positions 941–950 (ASKSTQLKTN) are enriched in polar residues. Residues 941-994 (ASKSTQLKTNRGQRKVTVSARTNRRCQTAEADSESDHEVPEPESEMKMRLPRRA) are disordered. S973, S975, S1002, and S1015 each carry phosphoserine. The span at 974-988 (ESDHEVPEPESEMKM) shows a compositional bias: basic and acidic residues.

It belongs to the CND3 (condensin subunit 3) family. As to quaternary structure, component of the condensin complex, which contains the SMC2 and SMC4 heterodimer, and three non SMC subunits that probably regulate the complex: NCAPH/BRRN1, NCAPD2/CAPD2 and NCAPG. Phosphorylated by CDK1. Its phosphorylation, as well as that of NCAPD2 and NCAPH subunits, activates the condensin complex and is required for chromosome condensation. As to expression, highly expressed in testis.

It is found in the nucleus. Its subcellular location is the cytoplasm. It localises to the chromosome. Regulatory subunit of the condensin complex, a complex required for conversion of interphase chromatin into mitotic-like condense chromosomes. The condensin complex probably introduces positive supercoils into relaxed DNA in the presence of type I topoisomerases and converts nicked DNA into positive knotted forms in the presence of type II topoisomerases. The protein is Condensin complex subunit 3 (NCAPG) of Homo sapiens (Human).